The primary structure comprises 222 residues: Large ribosomal subunit protein uL1 (222 aa).

The protein belongs to the universal ribosomal protein uL1 family. In terms of assembly, part of the 50S ribosomal subunit.

Its function is as follows. Binds directly to 23S rRNA. Probably involved in E site tRNA release. Protein L1 is also a translational repressor protein, it controls the translation of its operon by binding to its mRNA. This is Large ribosomal subunit protein uL1 from Pyrobaculum islandicum (strain DSM 4184 / JCM 9189 / GEO3).